A 196-amino-acid chain; its full sequence is UPF0301 protein BT_1078 (196 aa).

Belongs to the UPF0301 (AlgH) family.

In Bacteroides thetaiotaomicron (strain ATCC 29148 / DSM 2079 / JCM 5827 / CCUG 10774 / NCTC 10582 / VPI-5482 / E50), this protein is UPF0301 protein BT_1078.